A 144-amino-acid polypeptide reads, in one-letter code: Bacilliredoxin BCE_2233 (144 aa).

Belongs to the bacilliredoxin family.

This chain is Bacilliredoxin BCE_2233, found in Bacillus cereus (strain ATCC 10987 / NRS 248).